The chain runs to 233 residues: Lysoplasmalogenase TMEM86B (233 aa).

Residues 1–30 (MPCCDPYPWIGLNVGRLSSFPLLKYPQVRR) lie on the Cytoplasmic side of the membrane. Residues 31-47 (WLAPFIVACSLYFLLWI) traverse the membrane as a helical segment. Topologically, residues 48–53 (PEDQPS) are extracellular. A helical membrane pass occupies residues 54–75 (WVSALVKCQPILCLVLFLWAVA). Residues 76 to 81 (PGGSYT) lie on the Cytoplasmic side of the membrane. The chain crosses the membrane as a helical span at residues 82–100 (WLLQGALTCSAVGDACLIW). Residues 101-106 (PEAFFY) are Extracellular-facing. Residues 107-124 (GMAVFSVAHLLYLWAFGL) traverse the membrane as a helical segment. Topologically, residues 125–130 (SPLQPG) are cytoplasmic. The chain crosses the membrane as a helical span at residues 131–147 (LLLCTTLASLTYYSFLL). Over 148-153 (LHLEPN) the chain is Extracellular. A helical membrane pass occupies residues 154 to 170 (MVLPVAAYGLILNTMLW). Residues 171 to 178 (RGLVLGRS) are Cytoplasmic-facing. The chain crosses the membrane as a helical span at residues 179-195 (AGWGAVLFIFSDGVLAW). Topologically, residues 196–206 (DTFVYTLPFAR) are extracellular. A helical membrane pass occupies residues 207-225 (LVTMSTYYAAQLLLTLSAL). Residues 226 to 233 (RSPGLKTH) are Cytoplasmic-facing.

Belongs to the TMEM86 family. As to quaternary structure, homodimer.

It localises to the endoplasmic reticulum membrane. It is found in the cytoplasm. The catalysed reaction is a 1-O-(1Z-alkenyl)-sn-glycero-3-phosphocholine + H2O = a 2,3-saturated aldehyde + sn-glycerol 3-phosphocholine. It catalyses the reaction a 1-O-(1Z-alkenyl)-sn-glycero-3-phosphoethanolamine + H2O = a 2,3-saturated aldehyde + sn-glycero-3-phosphoethanolamine. Competitively inhibited by lysophosphatidic acid. Functionally, catalyzes the hydrolysis of the vinyl ether bond of choline or ethanolamine lysoplasmalogens, forming fatty aldehyde and glycerophosphocholine or glycerophosphoethanolamine, respectively and is specific for the sn-2-deacylated (lyso) form of plasmalogen. The protein is Lysoplasmalogenase TMEM86B (Tmem86b) of Rattus norvegicus (Rat).